The following is a 797-amino-acid chain: Calcium-transporting ATPase CtpE (797 aa).

3 helical membrane passes run 55 to 75 (LLLI…LLII), 215 to 235 (ILQF…YTQL), and 254 to 274 (VPMV…VGVV). Asp301 serves as the catalytic 4-aspartylphosphate intermediate. 3 residues coordinate Mg(2+): Asp301, Thr303, and Asp536. Transmembrane regions (helical) follow at residues 601–621 (TVYS…AIPL), 633–653 (IHVT…LSLA), 667–687 (VMTS…VTYL), 703–723 (ASTA…AVIA), 729–749 (WRLA…SLPL), and 764–784 (TSIA…MWWI).

This sequence belongs to the cation transport ATPase (P-type) (TC 3.A.3) family.

It localises to the cell membrane. It carries out the reaction Ca(2+)(in) + ATP + H2O = Ca(2+)(out) + ADP + phosphate + H(+). Its function is as follows. P-type ATPase involved in specific uptake of calcium. This Mycobacterium bovis (strain ATCC BAA-935 / AF2122/97) protein is Calcium-transporting ATPase CtpE (ctpE).